Here is a 269-residue protein sequence, read N- to C-terminus: Integral membrane protein 2C (269 aa).

Thr39 carries the phosphothreonine modification. The chain crosses the membrane as a helical; Signal-anchor for type II membrane protein span at residues 57 to 77 (VGGVCYLSMGMVVLLMGLVFA). The BRICHOS domain maps to 138–232 (FGGGDPADII…LCNGKDTYRL (95 aa)). Cys165 and Cys224 are disulfide-bonded. N-linked (GlcNAc...) asparagine glycosylation occurs at Asn171.

The protein belongs to the ITM2 family. As to quaternary structure, interacts with BACE1. Interacts with APP. Interacts with STMN2. Post-translationally, type I membrane-bound, as well as soluble, furin has a pre-eminent role in ITM2C proteolytic processing. PCSK7 and PCSK5 may also be involved although to a lesser extent. The soluble form of PCSK7 is incapable of processing ITM2C. Fails to undergo shedding by ADAM10 and intramembrane cleavage by SPPL2B.

It is found in the lysosome membrane. Its subcellular location is the cell membrane. In terms of biological role, negative regulator of amyloid-beta peptide production. May inhibit the processing of APP by blocking its access to alpha- and beta-secretase. Binding to the beta-secretase-cleaved APP C-terminal fragment is negligible, suggesting that ITM2C is a poor gamma-secretase cleavage inhibitor. May play a role in TNF-induced cell death and neuronal differentiation. This is Integral membrane protein 2C (Itm2c) from Rattus norvegicus (Rat).